The primary structure comprises 301 residues: Ribonuclease Z (301 aa).

Residues His-60, His-62, Asp-64, His-65, His-137, Asp-207, and His-265 each contribute to the Zn(2+) site. Asp-64 (proton acceptor) is an active-site residue.

It belongs to the RNase Z family. In terms of assembly, homodimer. Zn(2+) is required as a cofactor.

The catalysed reaction is Endonucleolytic cleavage of RNA, removing extra 3' nucleotides from tRNA precursor, generating 3' termini of tRNAs. A 3'-hydroxy group is left at the tRNA terminus and a 5'-phosphoryl group is left at the trailer molecule.. Zinc phosphodiesterase, which displays some tRNA 3'-processing endonuclease activity. Probably involved in tRNA maturation, by removing a 3'-trailer from precursor tRNA. This chain is Ribonuclease Z, found in Exiguobacterium sibiricum (strain DSM 17290 / CCUG 55495 / CIP 109462 / JCM 13490 / 255-15).